Reading from the N-terminus, the 125-residue chain is Large ribosomal subunit protein eL32 (125 aa).

This sequence belongs to the eukaryotic ribosomal protein eL32 family.

The sequence is that of Large ribosomal subunit protein eL32 (rpl32e) from Sulfolobus acidocaldarius (strain ATCC 33909 / DSM 639 / JCM 8929 / NBRC 15157 / NCIMB 11770).